The primary structure comprises 63 residues: Small ribosomal subunit protein bS21 (63 aa).

It belongs to the bacterial ribosomal protein bS21 family.

The chain is Small ribosomal subunit protein bS21 from Azobacteroides pseudotrichonymphae genomovar. CFP2.